The following is a 1534-amino-acid chain: MSSDLISQAESISNIEILRALFITDTHTTVGDVAVPSAEPGVEHDQISPGESDEEIEENISDQNNSSSQKRLQNAQFEALLTRRAEDTSNENIDRVPLNLSDNELSIAHLVAKQDVGGGLLDPREYQIELFERAKAQNTIAVLDTGSGKTLIAVLLLRHVLQNELNDRANGKPHRVSFFLVDSVTLAYQQAAVLRNNIDQNVAHFFGAMGTDLWDRQVWEEHLQQNMVIVCTAEILNQCLLNSHVRMNQINLLIFDEAHHTKKDHPYARIIRDSYFKASPPQRPRIFGMTASPIDTKGDIIAAATRLETLLDSRIATTSKITLLRQVVSRPIEKVWAYDRLESPFKTNLHKLMENRFGNVKALEGVFRFAWYASSELGRWCSDRAWLYALADDVLPKLEGHVNKLAESTAAATERDMAFKEITLIKEASNIVKAHTFNDPEFPGELSPKVRLLQTELSKHFSHAPETKCIIFTQKRYTAKTLHELFTILSIPHLRPGVLIGVRSGDIGGMNITFRQQFLALVKFRKGEINCLFATSVAEEGLDIPDCNLVVRFDLYHTLIQYVQSRGRARHYHSTYASMVEKDNSDHEARLREVREAEKTMQNFCETLPEDRILHGNDHDLDSLLQHEEGRRTFTVKSTGARLTYHSAIAILARYASSLQYEKETTPQATYVVQSVGNTYVCEVILPEKSPIRGLTGSPAIRKSIAKQSAAFDTCLLLRRHKLLDDFFKSIYHKRLPAMRNAKLAITSKKTNQYDMLLKPSIWRRHQGILPSKLYGTILSLLPSEPLSREHQPILVLTREKLPDFPAFPIYLDEDIETKVVPRSLDTGMELSAEELRALTTFTLRIFRDVFHKVYEQESEKLPYWLAPAEPLDANGREPGPRGIIDWKTVTFVQENDEIVFSRDLAPESLVNRFMFDKWDGRSRFFTIKVMEGLRAADPPPSSVPRRRHMDNIMSYCLSLSKNSRARFLAGCHWDQPVLQAELVRLRRNLLDKLTTEEKKIQTECFICAEPLKISAIPPSIASTCLAFPAIITRLDSYLISIEACDELDLVIRSDYALEAVTKDSDNTEEHRGQQIHFQRGMGKNYERLEFLGDCFLKMATSIALFTQNPDDDEFDYHVNRMCLICNKNLFNTAKKRQIYRYIRSRSFSRHVWYPDGLTLLQGKDHSKKMLSQAKHALGEKTIADVCEALIGACLLSGGPEHRFDMGVKAVSVFVDSPSHAVSRWKEYIGLYKPPNYQVRKAEGAETNLALQVEEKLGYHFRYPRLLCSAVTHPSTPSTWYFRVPCYQRLEFLGDSLLDMVCVEDLFHRFPDRDPQWLTEHKMAMVSNKFLGALAVKLGFHKHIKAFSNPLQAQITYYVEEIETAEAESEGAVDYWVVAKDPPKCLPDMVEAYLGAIFVDSDFSFEVIEAFFQAQIKPYFQDMSIYDTFANKHPTTFLHNRLANEFGCTNYCLKAGEMPAIDGMPAGVLAAVIVHNSVVSEATASSSRYAKIRASERALVVLDGLLPYEFRQRYNCNCQVVGNPASAPDIGTAI.

Residues 36–70 form a disordered region; that stretch reads PSAEPGVEHDQISPGESDEEIEENISDQNNSSSQK. Acidic residues predominate over residues 51–60; the sequence is ESDEEIEENI. In terms of domain architecture, Helicase ATP-binding spans 130–311; that stretch reads LFERAKAQNT…AAATRLETLL (182 aa). 143 to 150 contributes to the ATP binding site; sequence LDTGSGKT. Positions 256–259 match the DEAH box motif; the sequence is DEAH. One can recognise a Helicase C-terminal domain in the interval 456–613; sequence ELSKHFSHAP…FCETLPEDRI (158 aa). Residues 648-738 enclose the Dicer dsRNA-binding fold domain; it reads AIAILARYAS…KSIYHKRLPA (91 aa). The PAZ domain maps to 888–1016; that stretch reads KTVTFVQEND…ICAEPLKISA (129 aa). 2 consecutive RNase III domains span residues 1054–1199 and 1250–1402; these read SDYA…LSGG and ALQV…VDSD. The Mg(2+) site is built by E1291, D1388, and E1391. The 69-residue stretch at 1436–1504 folds into the DRBM domain; the sequence is TFLHNRLANE…SERALVVLDG (69 aa). Zn(2+) is bound by residues C1448, H1475, C1516, and C1518.

It belongs to the helicase family. Dicer subfamily. The cofactor is Mg(2+). Requires Mn(2+) as cofactor.

Functionally, dicer-like endonuclease involved in cleaving double-stranded RNA in the RNA interference (RNAi) pathway. Produces 21 to 25 bp dsRNAs (siRNAs) which target the selective destruction of homologous RNAs leading to sequence-specific suppression of gene expression, called post-transcriptional gene silencing (PTGS). Part of a broad host defense response against viral infection and transposons. In Aspergillus clavatus (strain ATCC 1007 / CBS 513.65 / DSM 816 / NCTC 3887 / NRRL 1 / QM 1276 / 107), this protein is Dicer-like protein 1 (dcl1).